The sequence spans 35 residues: Riboflavin-binding protein (35 aa).

Cys-5 and Cys-32 form a disulfide bridge.

It belongs to the folate receptor family.

Functionally, required for the transport of riboflavin to the developing oocyte. The protein is Riboflavin-binding protein of Struthio camelus (Common ostrich).